We begin with the raw amino-acid sequence, 144 residues long: Granulocyte-macrophage colony-stimulating factor (144 aa).

An N-terminal signal peptide occupies residues 1 to 17 (MWLQNLLLLGTVVCSIS). O-linked (GalNAc...) serine glycosylation occurs at serine 24. A glycan (O-linked (GalNAc...) threonine) is linked at threonine 27. Asparagine 44, asparagine 47, and asparagine 54 each carry an N-linked (GlcNAc...) asparagine glycan. 2 cysteine pairs are disulfide-bonded: cysteine 71–cysteine 113 and cysteine 105–cysteine 138.

This sequence belongs to the GM-CSF family. Monomer. The signaling GM-CSF receptor complex is a dodecamer of two head-to-head hexamers of two alpha, two beta, and two ligand subunits.

Its subcellular location is the secreted. Cytokine that stimulates the growth and differentiation of hematopoietic precursor cells from various lineages, including granulocytes, macrophages, eosinophils and erythrocytes. This Sus scrofa (Pig) protein is Granulocyte-macrophage colony-stimulating factor (CSF2).